Here is a 427-residue protein sequence, read N- to C-terminus: Adenylosuccinate synthetase (427 aa).

GTP is bound by residues 13–19 (GDEGKGK) and 41–43 (GHT). The active-site Proton acceptor is the aspartate 14. Aspartate 14 and glycine 41 together coordinate Mg(2+). IMP contacts are provided by residues 14–17 (DEGK), 39–42 (NAGH), threonine 129, arginine 143, glutamine 224, threonine 239, and arginine 303. The active-site Proton donor is histidine 42. Positions 117–137 (QEKQRGEESLGTTKRGIGPAY) are disordered. Residue 299-305 (TTTGRPR) participates in substrate binding. GTP-binding positions include arginine 305, 331–333 (KLD), and 414–416 (GTG).

This sequence belongs to the adenylosuccinate synthetase family. Homodimer. Mg(2+) is required as a cofactor.

The protein resides in the cytoplasm. It catalyses the reaction IMP + L-aspartate + GTP = N(6)-(1,2-dicarboxyethyl)-AMP + GDP + phosphate + 2 H(+). The protein operates within purine metabolism; AMP biosynthesis via de novo pathway; AMP from IMP: step 1/2. Plays an important role in the de novo pathway of purine nucleotide biosynthesis. Catalyzes the first committed step in the biosynthesis of AMP from IMP. The protein is Adenylosuccinate synthetase of Caldicellulosiruptor saccharolyticus (strain ATCC 43494 / DSM 8903 / Tp8T 6331).